Here is a 263-residue protein sequence, read N- to C-terminus: 3-methyl-2-oxobutanoate hydroxymethyltransferase (263 aa).

D45 and D84 together coordinate Mg(2+). Residues 45–46, D84, and K112 contribute to the 3-methyl-2-oxobutanoate site; that span reads DS. Residue E114 participates in Mg(2+) binding. E180 acts as the Proton acceptor in catalysis.

The protein belongs to the PanB family. As to quaternary structure, homodecamer; pentamer of dimers. The cofactor is Mg(2+).

It is found in the cytoplasm. It carries out the reaction 3-methyl-2-oxobutanoate + (6R)-5,10-methylene-5,6,7,8-tetrahydrofolate + H2O = 2-dehydropantoate + (6S)-5,6,7,8-tetrahydrofolate. It functions in the pathway cofactor biosynthesis; (R)-pantothenate biosynthesis; (R)-pantoate from 3-methyl-2-oxobutanoate: step 1/2. Its function is as follows. Catalyzes the reversible reaction in which hydroxymethyl group from 5,10-methylenetetrahydrofolate is transferred onto alpha-ketoisovalerate to form ketopantoate. The protein is 3-methyl-2-oxobutanoate hydroxymethyltransferase of Klebsiella pneumoniae (strain 342).